A 126-amino-acid chain; its full sequence is UPF0102 protein HD_0802 (126 aa).

It belongs to the UPF0102 family.

The protein is UPF0102 protein HD_0802 of Haemophilus ducreyi (strain 35000HP / ATCC 700724).